The following is a 371-amino-acid chain: DNA repair and recombination protein rti1 (371 aa).

The interval 346-371 (IDHNRSMPIRRPSLTSNNSANTFSTK) is disordered. Polar residues predominate over residues 358–371 (SLTSNNSANTFSTK).

This sequence belongs to the RAD52 family. In terms of assembly, interacts with rph51 and rph54.

Its function is as follows. Active in the repair of DNA damage and in mating-type switching. Probably involved in the repair of DNA double-strands breaks. Has a role in promoting S phase completion. The sequence is that of DNA repair and recombination protein rti1 (rti1) from Schizosaccharomyces pombe (strain 972 / ATCC 24843) (Fission yeast).